Reading from the N-terminus, the 395-residue chain is Protein NDRG1 (395 aa).

The segment at 325 to 395 (RSRTGSAASS…NTPKSMEISC (71 aa)) is disordered. A compositionally biased stretch (low complexity) spans 326–339 (SRTGSAASSSSQDG). Repeat copies occupy residues 339–348 (GNRSRSHTNE), 349–358 (GSRSRSHTGD), 359–368 (GNRSRAHTGD), and 369–378 (GNRSRSHTDS). The segment at 339–378 (GNRSRSHTNEGSRSRSHTGDGNRSRAHTGDGNRSRSHTDS) is 4 X 10 AA tandem repeats of G-[NS]-R-S-R-[AS]-H-T-[DGN]-[DES]. A compositionally biased stretch (basic and acidic residues) spans 345–376 (HTNEGSRSRSHTGDGNRSRAHTGDGNRSRSHT). The segment covering 377–389 (DSNNTNSEHNTPK) has biased composition (polar residues).

It belongs to the NDRG family.

Functionally, may be involved in pronephros development, after specification of the pronephros. The protein is Protein NDRG1 of Xenopus tropicalis (Western clawed frog).